We begin with the raw amino-acid sequence, 601 residues long: Alpha-terpineol synthase, chloroplastic (601 aa).

Residues 1–47 (MSTISIHHVGILRNPLHSKSKRASINKPWSLSLPRSSSASRLVEPCR) constitute a chloroplast transit peptide. The Mn(2+) site is built by aspartate 357 and aspartate 361. A DDXXD motif motif is present at residues 357-361 (DDVYD). Homodimerization stretches follow at residues 363–369 (YGTLDEL) and 435–471 (EAEW…ELSL). Residues aspartate 499 and glutamate 507 each coordinate Mn(2+).

Belongs to the terpene synthase family. Homodimer. The cofactor is Mn(2+). Requires Mg(2+) as cofactor.

Its subcellular location is the plastid. The protein resides in the chloroplast. The enzyme catalyses (2E)-geranyl diphosphate + H2O = (S)-alpha-terpineol + diphosphate. It carries out the reaction (2E)-geranyl diphosphate + H2O = (R)-alpha-terpineol + diphosphate. The protein operates within secondary metabolite biosynthesis; terpenoid biosynthesis. Its function is as follows. Involved in the biosynthesis of phenolic monoterpenes natural products. Monoterpene synthase which catalyzes the conversion of geranyl diphosphate (GPP) to alpha-terpineol (isomer is not determined). The sequence is that of Alpha-terpineol synthase, chloroplastic from Thymus caespititius (Cretan thyme).